Reading from the N-terminus, the 668-residue chain is BTB/POZ domain-containing protein At5g66560 (668 aa).

The region spanning 21 to 133 is the BTB domain; that stretch reads SDIEIEVDDM…CYGVKMDLSA (113 aa). Positions 73–84 are enriched in basic and acidic residues; it reads ETDKKGKGHEIE. Positions 73–98 are disordered; it reads ETDKKGKGHEIEDDKEEEEVEEQEIE. Positions 85–98 are enriched in acidic residues; the sequence is DDKEEEEVEEQEIE. An NPH3 domain is found at 254 to 530; it reads ELWFEDLTQL…VQVLFFEQLQ (277 aa). Y471 carries the phosphotyrosine modification.

It belongs to the NPH3 family.

The protein operates within protein modification; protein ubiquitination. Functionally, may act as a substrate-specific adapter of an E3 ubiquitin-protein ligase complex (CUL3-RBX1-BTB) which mediates the ubiquitination and subsequent proteasomal degradation of target proteins. The sequence is that of BTB/POZ domain-containing protein At5g66560 from Arabidopsis thaliana (Mouse-ear cress).